The chain runs to 431 residues: Trigger factor (431 aa).

A PPIase FKBP-type domain is found at 161–246 (DDRVTIDFVG…LKKVENIVLP (86 aa)).

This sequence belongs to the FKBP-type PPIase family. Tig subfamily.

The protein localises to the cytoplasm. It carries out the reaction [protein]-peptidylproline (omega=180) = [protein]-peptidylproline (omega=0). Involved in protein export. Acts as a chaperone by maintaining the newly synthesized protein in an open conformation. Functions as a peptidyl-prolyl cis-trans isomerase. In Glaesserella parasuis serovar 5 (strain SH0165) (Haemophilus parasuis), this protein is Trigger factor.